We begin with the raw amino-acid sequence, 461 residues long: Putative forkhead-related transcription factor fkh-5 (461 aa).

The segment at residues 171 to 262 (QRPQLSYQLL…VEKEMIDVKT (92 aa)) is a DNA-binding region (fork-head).

The protein localises to the nucleus. Transcription factor. Binds to DNA sequence motif 5'-CTGTTTCA-3'. Regulates expression of a class of small RNAs, known as 21U-RNAs, perhaps acting redundantly with fkh-4 and fkh-3. In Caenorhabditis elegans, this protein is Putative forkhead-related transcription factor fkh-5 (fkh-5).